Reading from the N-terminus, the 102-residue chain is Urease subunit beta (102 aa).

Belongs to the urease beta subunit family. In terms of assembly, heterotrimer of UreA (gamma), UreB (beta) and UreC (alpha) subunits. Three heterotrimers associate to form the active enzyme.

The protein resides in the cytoplasm. The catalysed reaction is urea + 2 H2O + H(+) = hydrogencarbonate + 2 NH4(+). The protein operates within nitrogen metabolism; urea degradation; CO(2) and NH(3) from urea (urease route): step 1/1. This is Urease subunit beta from Bordetella pertussis (strain Tohama I / ATCC BAA-589 / NCTC 13251).